We begin with the raw amino-acid sequence, 602 residues long: Alpha-glucosides permease MPH3 (602 aa).

Residues 1–106 lie on the Cytoplasmic side of the membrane; sequence MKNLSFLINR…AAAWSLLVST (106 aa). The helical transmembrane segment at 107–127 threads the bilayer; that stretch reads TLIMEGYDTAILGAFYALPIF. Residues 128 to 142 lie on the Extracellular side of the membrane; that stretch reads QRKFGSQNDKTGEWE. The chain crosses the membrane as a helical span at residues 143–163; it reads ISASWQIGLTLCYMAGEIVGL. The Cytoplasmic portion of the chain corresponds to 164 to 178; sequence QLTGPSVDLVGNRYT. A helical transmembrane segment spans residues 179–199; that stretch reads LIIALFFLAAFTFILYFCNSL. G200 is a topological domain (extracellular). The chain crosses the membrane as a helical span at residues 201 to 221; sequence MIAVGQALCGMPWGCFQCLTV. Over 222 to 234 the chain is Cytoplasmic; that stretch reads SYASEICPLALRY. The helical transmembrane segment at 235 to 255 threads the bilayer; the sequence is YLTTYSNLCWLFGQLFAAGIM. Over 256-270 the chain is Extracellular; the sequence is KNSQKKYADSELGYK. Residues 271–291 traverse the membrane as a helical segment; that stretch reads LPFALQWILPVPLALGIFFAP. Topologically, residues 292–363 are cytoplasmic; sequence ESPWWLVKKG…EDKINRRRTR (72 aa). A helical membrane pass occupies residues 364 to 384; sequence ITCLCWAGQATCGSILIGYST. Over 385–397 the chain is Extracellular; sequence YFYEKAGVSTEMS. A helical membrane pass occupies residues 398–418; sequence FTFSIIQYCLGICATFLSWWA. At 419–426 the chain is on the cytoplasmic side; sequence SKYFGRYD. A helical transmembrane segment spans residues 427 to 447; sequence LYAFGLAFQTIVFFIIGGLGC. Topologically, residues 448 to 459 are extracellular; that stretch reads SSTHGSKMGSGS. A helical membrane pass occupies residues 460-480; sequence LLMAVAFFYNLGIAPVVFCLV. The Cytoplasmic portion of the chain corresponds to 481–492; sequence SEMPSSRLRTKT. Residues 493-513 form a helical membrane-spanning segment; the sequence is IILARNTYNVVSIICSVLILY. Residues 514-525 are Extracellular-facing; sequence QLNSKKWNWGAK. Residues 526–546 traverse the membrane as a helical segment; sequence SGFFWGVLCFCTLIWAVVDLP. The Cytoplasmic segment spans residues 547–602; that stretch reads ETAGKTFVEINELFKLGVSARKFKSTKVDPFVVKTPPKDVSHNDPKGDIEASIAEE. The span at 582-595 shows a compositional bias: basic and acidic residues; sequence PPKDVSHNDPKGDI. The interval 582 to 602 is disordered; that stretch reads PPKDVSHNDPKGDIEASIAEE.

The protein belongs to the major facilitator superfamily. Sugar transporter (TC 2.A.1.1) family.

The protein resides in the cell membrane. Functionally, high-affinity uptake of maltose and maltotriose. Also transports alpha-methylglucoside, glucose and turanose but not melezitose or trehalose. The sequence is that of Alpha-glucosides permease MPH3 (MPH3) from Saccharomyces cerevisiae (strain ATCC 204508 / S288c) (Baker's yeast).